The chain runs to 269 residues: MANEPQEHEEGKPFFPPLGDSGEEGPPNIPQDPTPGTPPGPINSKNEDYPPPLENPGPNKSEGPPDGSGNSSPPVTMLVKNNGDRTKQDVSESGGNNSAPNSVESKHTSSSSSAGNGNETKCPDEQNTQECITTIYIPWEDAKPKLMGLVKLDSSDSEEERSPFNKYPKNYKKLRVDMGENWPPGIPPPQLPPRPANLGQKQSATSKNGPQIILREATEVESQQATDGQLNHRVEKVEKKLTCVICLLIGILVLLILLFMLGFLFLLMK.

Residues 1 to 12 are compositionally biased toward basic and acidic residues; that stretch reads MANEPQEHEEGK. A disordered region spans residues 1–127; sequence MANEPQEHEE…NETKCPDEQN (127 aa). Residues 1–246 are Cytoplasmic-facing; the sequence is MANEPQEHEE…VEKKLTCVIC (246 aa). Pro residues predominate over residues 27–41; sequence PNIPQDPTPGTPPGP. Positions 61-74 are enriched in low complexity; sequence SEGPPDGSGNSSPP. Polar residues-rich tracts occupy residues 91 to 101 and 114 to 127; these read SESGGNNSAPN and AGNG…DEQN. Tyr136 bears the Phosphotyrosine; by host LCK mark. Positions 158–167 are CSKH/LBD2; it reads EEERSPFNKY. The SH3B/LBD1 stretch occupies residues 186–195; sequence IPPPQLPPRP. The chain crosses the membrane as a helical span at residues 247-267; the sequence is LLIGILVLLILLFMLGFLFLL. Residues 268 to 269 are Extracellular-facing; that stretch reads MK.

As to quaternary structure, homodimer. Binds SH3 domain of host LYN, HCK, LCK, SRC, FYN or YES. When tyrosine-phosphorylated, binds to the SH2 domain of host LCK, SRC, or FYN. Phosphorylated by host LCK, SRC and less efficiently by FYN.

It localises to the host cell membrane. Transforms host T-cells, inducing T-cell lymphomia in the host. Activates at least SRC and LCK tyrosines kinases, thereby activating signaling pathway transforming host T-cells. Human T-cells transformed ex vivo display a IL2 indenpendent growth phenotype. This is Protein tio from Ateles (AtHV-3).